The sequence spans 363 residues: NAD(P)H-quinone oxidoreductase subunit 1, chloroplastic (363 aa).

8 helical membrane-spanning segments follow: residues 27–47 (LIPI…IVWL), 93–113 (WLFS…YLVV), 124–144 (LGVG…GLLM), 162–182 (AAQA…VALL), 200–220 (ILGW…IASL), 250–270 (FGLF…FVSV), 303–323 (ATLG…LSIL), and 343–363 (FLLP…LALL).

This sequence belongs to the complex I subunit 1 family. In terms of assembly, NDH is composed of at least 16 different subunits, 5 of which are encoded in the nucleus.

The protein resides in the plastid. It localises to the chloroplast thylakoid membrane. The enzyme catalyses a plastoquinone + NADH + (n+1) H(+)(in) = a plastoquinol + NAD(+) + n H(+)(out). It catalyses the reaction a plastoquinone + NADPH + (n+1) H(+)(in) = a plastoquinol + NADP(+) + n H(+)(out). In terms of biological role, NDH shuttles electrons from NAD(P)H:plastoquinone, via FMN and iron-sulfur (Fe-S) centers, to quinones in the photosynthetic chain and possibly in a chloroplast respiratory chain. The immediate electron acceptor for the enzyme in this species is believed to be plastoquinone. Couples the redox reaction to proton translocation, and thus conserves the redox energy in a proton gradient. The protein is NAD(P)H-quinone oxidoreductase subunit 1, chloroplastic of Chaetosphaeridium globosum (Charophycean green alga).